Here is a 163-residue protein sequence, read N- to C-terminus: Adenosine 5'-monophosphoramidase HINT2 (163 aa).

The N-terminal 17 residues, 1–17 (MAAAVVLAAGLRAARRA), are a transit peptide targeting the mitochondrion. Residues 55–163 (IFSRILDKSL…GGRQLQWPPG (109 aa)) enclose the HIT domain. AMP is bound by residues Ser63 and Asp80. Lys119 is modified (N6-acetyllysine). Position 136 (Asn136) interacts with AMP. The residue at position 139 (Lys139) is an N6-acetyllysine. AMP contacts are provided by residues 142–145 (AQSV) and 149–151 (HIH). The Histidine triad motif motif lies at 147-151 (HLHIH). The active-site Tele-AMP-histidine intermediate is the His149.

This sequence belongs to the HINT family. In terms of tissue distribution, high expression in liver and pancreas. Expression is significantly down-regulated in hepatocellular carcinoma (HCC) patients.

It localises to the mitochondrion. It catalyses the reaction adenosine 5'-phosphoramidate + H2O = AMP + NH4(+). In terms of biological role, exhibits adenosine 5'-monophosphoramidase activity, hydrolyzing purine nucleotide phosphoramidates with a single phosphate group such as adenosine 5'monophosphoramidate (AMP-NH2) to yield AMP and NH2. Hydrolyzes adenosine 5'-O-p-nitrophenylphosphoramidate (AMP-pNA). Hydrolyzes fluorogenic purine nucleoside tryptamine phosphoramidates in vitro. May be involved in steroid biosynthesis. May play a role in apoptosis. The chain is Adenosine 5'-monophosphoramidase HINT2 from Homo sapiens (Human).